We begin with the raw amino-acid sequence, 267 residues long: Regulatory protein VirG (267 aa).

In terms of domain architecture, Response regulatory spans 29–143; that stretch reads HVLLVDDDVA…EFLARIRVAL (115 aa). Residue aspartate 78 is modified to 4-aspartylphosphate. The segment at residues 155-255 is a DNA-binding region (ompR/PhoB-type); it reads RRSFCFTDWT…ARGAGYFFDA (101 aa).

Phosphorylated by wide host range (WHR) VirA protein.

It localises to the cytoplasm. VirG is required for the positive regulation of at least two vir loci encoded by the Ti plasmid of A.tumefaciens. In Agrobacterium tumefaciens (strain 15955), this protein is Regulatory protein VirG (virG).